Here is a 652-residue protein sequence, read N- to C-terminus: Phosphatidylinositol-binding clathrin assembly protein (652 aa).

At Ser2 the chain carries N-acetylserine. Positions 14–145 (QHSVTGSAVS…VSYRQVAFDF (132 aa)) constitute an ENTH domain. 2 positions are modified to phosphoserine: Ser16 and Ser20. The interaction with PIMREG stretch occupies residues 221 to 294 (KYFDMKKNQC…LEGKKIKDST (74 aa)). A Glycyl lysine isopeptide (Lys-Gly) (interchain with G-Cter in SUMO2) cross-link involves residue Lys238. Residues Ser303 and Ser315 each carry the phosphoserine modification. The interval 559-580 (KNDVNWSQPGEKKLTGGSNWQP) is disordered.

The protein belongs to the PICALM/SNAP91 family. As to quaternary structure, binds to clathrin; involves primarily the C-terminal sequences, but the full-length protein is required for full binding capacity. Binds phosphatidylinositol 4,5- bisphosphate. Interacts with PIMREG; this interaction may change the subcellular location into the nucleus. Interacts with AP2A1 (via its alpha-appendage domain). Interacts (via N-terminus) with VAMP2; VAMP3; VAMP7 and VAMP8 (Via N-terminus). Interacts with LC3/MAP1LC3A. In terms of tissue distribution, expressed in all tissues examined.

It localises to the cell membrane. The protein resides in the membrane. Its subcellular location is the clathrin-coated pit. The protein localises to the golgi apparatus. It is found in the cytoplasmic vesicle. It localises to the clathrin-coated vesicle. The protein resides in the nucleus. Its function is as follows. Cytoplasmic adapter protein that plays a critical role in clathrin-mediated endocytosis which is important in processes such as internalization of cell receptors, synaptic transmission or removal of apoptotic cells. Recruits AP-2 and attaches clathrin triskelions to the cytoplasmic side of plasma membrane leading to clathrin-coated vesicles (CCVs) assembly. Furthermore, regulates clathrin-coated vesicle size and maturation by directly sensing and driving membrane curvature. In addition to binding to clathrin, mediates the endocytosis of small R-SNARES (Soluble NSF Attachment Protein REceptors) between plasma membranes and endosomes including VAMP2, VAMP3, VAMP4, VAMP7 or VAMP8. In turn, PICALM-dependent SNARE endocytosis is required for the formation and maturation of autophagic precursors. Modulates thereby autophagy and the turnover of autophagy substrates such as MAPT/TAU or amyloid precursor protein cleaved C-terminal fragment (APP-CTF). The sequence is that of Phosphatidylinositol-binding clathrin assembly protein (PICALM) from Homo sapiens (Human).